The chain runs to 61 residues: MGKVHGSLARAGKVKSQTPKVEKQEKPKQPKGRAYKRLLYVRRFVNVTNMVGGKRRMNPSS.

A disordered region spans residues Met-1–Lys-36.

Belongs to the eukaryotic ribosomal protein eS30 family. As to quaternary structure, component of the small ribosomal subunit (SSU). Mature yeast ribosomes consist of a small (40S) and a large (60S) subunit. The 40S small subunit contains 1 molecule of ribosomal RNA (18S rRNA) and at least 33 different proteins. The large 60S subunit contains 3 rRNA molecules (25S, 5.8S and 5S rRNA) and at least 46 different proteins.

Its subcellular location is the cytoplasm. The protein localises to the nucleus. In terms of biological role, component of the ribosome, a large ribonucleoprotein complex responsible for the synthesis of proteins in the cell. The small ribosomal subunit (SSU) binds messenger RNAs (mRNAs) and translates the encoded message by selecting cognate aminoacyl-transfer RNA (tRNA) molecules. The large subunit (LSU) contains the ribosomal catalytic site termed the peptidyl transferase center (PTC), which catalyzes the formation of peptide bonds, thereby polymerizing the amino acids delivered by tRNAs into a polypeptide chain. The nascent polypeptides leave the ribosome through a tunnel in the LSU and interact with protein factors that function in enzymatic processing, targeting, and the membrane insertion of nascent chains at the exit of the ribosomal tunnel. The protein is Small ribosomal subunit protein eS30A (rps3001) of Schizosaccharomyces pombe (strain 972 / ATCC 24843) (Fission yeast).